A 316-amino-acid polypeptide reads, in one-letter code: Aspartate carbamoyltransferase catalytic subunit (316 aa).

Residues arginine 66 and threonine 67 each coordinate carbamoyl phosphate. Lysine 94 contacts L-aspartate. 3 residues coordinate carbamoyl phosphate: arginine 116, histidine 146, and glutamine 149. 2 residues coordinate L-aspartate: arginine 179 and arginine 234. The carbamoyl phosphate site is built by glycine 275 and proline 276.

It belongs to the aspartate/ornithine carbamoyltransferase superfamily. ATCase family. In terms of assembly, heterododecamer (2C3:3R2) of six catalytic PyrB chains organized as two trimers (C3), and six regulatory PyrI chains organized as three dimers (R2).

It catalyses the reaction carbamoyl phosphate + L-aspartate = N-carbamoyl-L-aspartate + phosphate + H(+). It participates in pyrimidine metabolism; UMP biosynthesis via de novo pathway; (S)-dihydroorotate from bicarbonate: step 2/3. Catalyzes the condensation of carbamoyl phosphate and aspartate to form carbamoyl aspartate and inorganic phosphate, the committed step in the de novo pyrimidine nucleotide biosynthesis pathway. The chain is Aspartate carbamoyltransferase catalytic subunit from Nitrosomonas europaea (strain ATCC 19718 / CIP 103999 / KCTC 2705 / NBRC 14298).